The following is an 81-amino-acid chain: Putative membrane protein insertion efficiency factor 1 (81 aa).

This sequence belongs to the UPF0161 family.

It localises to the cell membrane. Its function is as follows. Could be involved in insertion of integral membrane proteins into the membrane. The polypeptide is Putative membrane protein insertion efficiency factor 1 (Bacillus licheniformis (strain ATCC 14580 / DSM 13 / JCM 2505 / CCUG 7422 / NBRC 12200 / NCIMB 9375 / NCTC 10341 / NRRL NRS-1264 / Gibson 46)).